We begin with the raw amino-acid sequence, 579 residues long: Folliculin (579 aa).

The tract at residues Q31 to C82 is disordered. Phosphoserine occurs at positions 62 and 73. Residues P63–P76 show a composition bias toward low complexity. In terms of domain architecture, uDENN FLCN/SMCR8-type spans R86 to T242. Positions E287–A310 form a coiled coil. Residues E294–E308 are compositionally biased toward acidic residues. Positions E294 to T323 are disordered. S302, S406, S537, S542, and S571 each carry phosphoserine. The cDENN FLCN/SMCR8-type domain occupies Q339 to T491. The dDENN FLCN/SMCR8-type domain occupies Q493–S558.

Belongs to the folliculin family. Interacts (via C-terminus) with FNIP1 or FNIP2 (via C-terminus). Component of the lysosomal folliculin complex (LFC), composed of FLCN, FNIP1 (or FNIP2), RagA/RRAGA or RagB/RRAGB GDP-bound, RagC/RRAGC or RagD/RRAGD GTP-bound, and Ragulator. Interaction with FNIP1 or FNIP2 mediates indirect interaction with the PRKAA1, PRKAB1 and PRKAG1 subunits of 5'-AMP-activated protein kinase (AMPK). Interacts with HSP90AA1 in the presence of FNIP1. Interacts with HSP70, STUB1, CDC37, AHSA1, CCT2, STIP1, PTGES3 and PPP5C. Interacts with GABARAP; interaction takes place in the presence of FNIP1 and/or FNIP2. Interacts with RILP; the interaction is direct and promotes association between RILP and RAB34. Interacts with KIF3A and KIF3B. Interacts with lactate dehydrogenase LDHA, but not LDHB; the interaction is direct, may preferentially bind LDHA dimers rather than tetramers, and regulates LDHA activity, acting as an uncompetitive inhibitor. Post-translationally, phosphorylation by ULK1 modulates the interaction with GABARAP and is required to regulate autophagy. In terms of tissue distribution, highly expressed in adult heart, pancreas, and prostate with moderate expression in adult brain, kidney, liver, adipose tissue and lung.

The protein localises to the lysosome membrane. The protein resides in the cytoplasm. It localises to the cytosol. Its subcellular location is the cell projection. It is found in the cilium. The protein localises to the cytoskeleton. The protein resides in the microtubule organizing center. It localises to the centrosome. Its subcellular location is the spindle. It is found in the nucleus. GTPase-activating activity is inhibited in the folliculin complex (LFC), which stabilizes the GDP-bound state of RagA/RRAGA (or RagB/RRAGB), because Arg-164 is located far from the RagC/RRAGC or RagD/RRAGD nucleotide pocket. Disassembly of the LFC complex upon amino acid restimulation liberates the GTPase-activating activity. Functionally, multi-functional protein, involved in both the cellular response to amino acid availability and in the regulation of glycolysis. GTPase-activating protein that plays a key role in the cellular response to amino acid availability through regulation of the non-canonical mTORC1 signaling cascade controlling the MiT/TFE factors TFEB and TFE3. Activates mTORC1 by acting as a GTPase-activating protein: specifically stimulates GTP hydrolysis by RagC/RRAGC or RagD/RRAGD, promoting the conversion to the GDP-bound state of RagC/RRAGC or RagD/RRAGD, and thereby activating the kinase activity of mTORC1. The GTPase-activating activity is inhibited during starvation and activated in presence of nutrients. Acts as a key component for non-canonical mTORC1-dependent control of the MiT/TFE factors TFEB and TFE3, while it is not involved in mTORC1-dependent phosphorylation of canonical RPS6KB1/S6K1 and EIF4EBP1/4E-BP1. In low-amino acid conditions, the lysosomal folliculin complex (LFC) is formed on the membrane of lysosomes, which inhibits the GTPase-activating activity of FLCN, inactivates mTORC1 and maximizes nuclear translocation of TFEB and TFE3. Upon amino acid restimulation, RagA/RRAGA (or RagB/RRAGB) nucleotide exchange promotes disassembly of the LFC complex and liberates the GTPase-activating activity of FLCN, leading to activation of mTORC1 and subsequent cytoplasmic retention of TFEB and TFE3. Indirectly acts as a positive regulator of Wnt signaling by promoting mTOR-dependent cytoplasmic retention of MiT/TFE factor TFE3. Required for the exit of hematopoietic stem cell from pluripotency by promoting mTOR-dependent cytoplasmic retention of TFE3, thereby increasing Wnt signaling. Involved in the control of embryonic stem cells differentiation; together with LAMTOR1 it is necessary to recruit and activate RagC/RRAGC and RagD/RRAGD at the lysosomes, and to induce exit of embryonic stem cells from pluripotency via non-canonical, mTOR-independent TFE3 inactivation. Acts as an inhibitor of browning of adipose tissue by regulating mTOR-dependent cytoplasmic retention of TFE3. In response to flow stress, regulates STK11/LKB1 accumulation and mTORC1 activation through primary cilia: may act by recruiting STK11/LKB1 to primary cilia for activation of AMPK resided at basal bodies, causing mTORC1 down-regulation. Together with FNIP1 and/or FNIP2, regulates autophagy: following phosphorylation by ULK1, interacts with GABARAP and promotes autophagy. Required for starvation-induced perinuclear clustering of lysosomes by promoting association of RILP with its effector RAB34. Regulates glycolysis by binding to lactate dehydrogenase LDHA, acting as an uncompetitive inhibitor. The sequence is that of Folliculin from Mus musculus (Mouse).